We begin with the raw amino-acid sequence, 208 residues long: Large ribosomal subunit protein uL4 (208 aa).

This sequence belongs to the universal ribosomal protein uL4 family. Part of the 50S ribosomal subunit.

Functionally, one of the primary rRNA binding proteins, this protein initially binds near the 5'-end of the 23S rRNA. It is important during the early stages of 50S assembly. It makes multiple contacts with different domains of the 23S rRNA in the assembled 50S subunit and ribosome. In terms of biological role, forms part of the polypeptide exit tunnel. The polypeptide is Large ribosomal subunit protein uL4 (Anaplasma marginale (strain Florida)).